The primary structure comprises 285 residues: Hydroxyethylthiazole kinase (285 aa).

Position 43 (Met43) interacts with substrate. Residues Lys119 and Ser172 each coordinate ATP. Gly199 provides a ligand contact to substrate.

Belongs to the Thz kinase family. Mg(2+) is required as a cofactor.

The catalysed reaction is 5-(2-hydroxyethyl)-4-methylthiazole + ATP = 4-methyl-5-(2-phosphooxyethyl)-thiazole + ADP + H(+). It functions in the pathway cofactor biosynthesis; thiamine diphosphate biosynthesis; 4-methyl-5-(2-phosphoethyl)-thiazole from 5-(2-hydroxyethyl)-4-methylthiazole: step 1/1. Catalyzes the phosphorylation of the hydroxyl group of 4-methyl-5-beta-hydroxyethylthiazole (THZ). In Desulfovibrio desulfuricans (strain ATCC 27774 / DSM 6949 / MB), this protein is Hydroxyethylthiazole kinase.